We begin with the raw amino-acid sequence, 93 residues long: Small ribosomal subunit protein uS19 (93 aa).

The protein belongs to the universal ribosomal protein uS19 family.

Functionally, protein S19 forms a complex with S13 that binds strongly to the 16S ribosomal RNA. In Rhodococcus erythropolis (strain PR4 / NBRC 100887), this protein is Small ribosomal subunit protein uS19.